The sequence spans 337 residues: Sorting nexin-15 (337 aa).

The region spanning 1-130 (MSRQAKDDFL…EFFRGGEVTR (130 aa)) is the PX domain. Positions 51, 53, 87, and 96 each coordinate a 1,2-diacyl-sn-glycero-3-phospho-(1D-myo-inositol-3-phosphate). Position 105 is an omega-N-methylarginine (Arg-105). Residues 133 to 156 (EVSRDLRILPPPLIPTPPPDEARL) are disordered. Over residues 141–151 (LPPPLIPTPPP) the composition is skewed to pro residues. 2 positions are modified to phosphoserine: Ser-201 and Ser-227. The interval 244 to 270 (LDQEPWEPGGQEEEEAEDGEPAPAYLG) is disordered. Residues 253–263 (GQEEEEAEDGE) are compositionally biased toward acidic residues. The 73-residue stretch at 265–337 (APAYLGQATE…RAEMLHTHLP (73 aa)) folds into the MIT domain.

It belongs to the sorting nexin family. Homodimer. Interacts with SNX1, SNX2 and SNX4.

The protein localises to the cytoplasm. The protein resides in the membrane. It localises to the cytoplasmic vesicle membrane. Functionally, may be involved in several stages of intracellular trafficking. Overexpression of SNX15 disrupts the normal trafficking of proteins from the plasma membrane to recycling endosomes or the TGN. This chain is Sorting nexin-15 (Snx15), found in Mus musculus (Mouse).